A 931-amino-acid chain; its full sequence is GPI ethanolamine phosphate transferase 1 (931 aa).

Residue M1 is a topological domain, cytoplasmic. The helical transmembrane segment at 2 to 24 threads the bilayer; the sequence is LLFFTLGLLIHFVFFASIFDIYF. At 25-442 the chain is on the lumenal side; that stretch reads TSPLVHGMTP…SYYHTYDRFF (418 aa). N-linked (GlcNAc...) asparagine glycosylation is found at N128, N192, and N350. The helical transmembrane segment at 443 to 463 threads the bilayer; sequence LGVNVVIGFVGWISYASLLII. At 464–482 the chain is on the cytoplasmic side; sequence KSHSNLIKGVSKEVKKPSH. A helical transmembrane segment spans residues 483-503; sequence LLPCSFVAIGILVAFFLLIQA. Residues 504–508 are Lumenal-facing; the sequence is CPWTY. Residues 509–529 traverse the membrane as a helical segment; the sequence is YVYGLLPLPIWYAVLREFQVI. Topologically, residues 530-543 are cytoplasmic; it reads QDLVVSVLTYPLSH. A helical membrane pass occupies residues 544–564; that stretch reads FVGYLLAFTLGIEVLVLSFFY. Position 565 (R565) is a topological domain, lumenal. A helical transmembrane segment spans residues 566-586; the sequence is YMLTAGLTAFAAWPFLTRLWT. Residues 587–591 lie on the Cytoplasmic side of the membrane; that stretch reads RAKMT. The helical transmembrane segment at 592–612 threads the bilayer; it reads SLSWTFFSLLLAVFPLMPVVG. Over 613–618 the chain is Lumenal; that stretch reads RKPDIS. A helical membrane pass occupies residues 619 to 639; that stretch reads LVMGAGLLVLLLSLCVVTSLM. The Cytoplasmic portion of the chain corresponds to 640–649; that stretch reads KRKDSFIKEE. A helical transmembrane segment spans residues 650–670; sequence LLVHLLQVLSTVLSMYVVYST. Over 671–685 the chain is Lumenal; it reads QSSLLRKQGLPLMNQ. Residues 686–706 form a helical membrane-spanning segment; that stretch reads IISWATLASSLVVPLLSSPVL. The Cytoplasmic portion of the chain corresponds to 707 to 723; that stretch reads FQRLFSILLSLMSTYLL. A helical membrane pass occupies residues 724–744; that stretch reads LSTGYEALFPLVLSCLMFVWI. Over 745 to 786 the chain is Lumenal; that stretch reads NIEQETLQQSGVCCKQKLTSIQFSYNTDITQFRQLYLDDIRR. The helical transmembrane segment at 787 to 807 threads the bilayer; sequence AFFLVFFLVTAFFGTGNIASI. Over 808 to 824 the chain is Cytoplasmic; sequence NSFDLASVYCFLTVFSP. The chain crosses the membrane as a helical span at residues 825–845; it reads FMMGALMMWKILIPFVLVMCA. Over 846–858 the chain is Lumenal; that stretch reads FEAVQLTTQLSSK. Residues 859 to 879 traverse the membrane as a helical segment; it reads SLFLIVLVISDIMALHFFFLV. Residues 880-894 lie on the Cytoplasmic side of the membrane; that stretch reads KDYGSWLDIGTSISH. A helical membrane pass occupies residues 895–915; the sequence is YVIVMSMTIFLVFLNGLAQLL. At 916 to 931 the chain is on the lumenal side; that stretch reads TTKKLRLCGKPKSHFM.

This sequence belongs to the PIGG/PIGN/PIGO family. PIGN subfamily.

Its subcellular location is the endoplasmic reticulum membrane. The protein operates within glycolipid biosynthesis; glycosylphosphatidylinositol-anchor biosynthesis. Its function is as follows. Ethanolamine phosphate transferase that catalyzes an ethanolamine phosphate (EtNP) transfer from phosphatidylethanolamine (PE) to the 2-OH position of the first alpha-1,4-linked mannose of the alpha-D-Man-(1-&gt;6)-alpha-D-Man-(1-&gt;4)-alpha-D-GlcN-(1-&gt;6)-(1-radyl,2-acyl-sn-glycero-3-phospho)-2-acyl-inositol (also termed H3) intermediate to generate an alpha-D-Man-(1-&gt;6)-2-PEtn-alpha-D-Man-(1-&gt;4)-alpha-D-GlcN-(1-&gt;6)-(1-radyl,2-acyl-sn-glycero-3-phospho)-2-acyl-inositol and participates in the eighth step of the glycosylphosphatidylinositol-anchor biosynthesis. May act as suppressor of replication stress and chromosome missegregation. The protein is GPI ethanolamine phosphate transferase 1 of Homo sapiens (Human).